Consider the following 764-residue polypeptide: uncharacterized protein (764 aa).

This is an uncharacterized protein from Acanthamoeba polyphaga (Amoeba).